The sequence spans 566 residues: Arginine--tRNA ligase (566 aa).

The 'HIGH' region signature appears at 121 to 131 (ANPNGPFHIGH).

This sequence belongs to the class-I aminoacyl-tRNA synthetase family.

It localises to the cytoplasm. The enzyme catalyses tRNA(Arg) + L-arginine + ATP = L-arginyl-tRNA(Arg) + AMP + diphosphate. The protein is Arginine--tRNA ligase of Methanococcus maripaludis (strain C5 / ATCC BAA-1333).